Consider the following 301-residue polypeptide: Glycine cleavage system transcriptional activator homolog (301 aa).

The HTH lysR-type domain maps to 10-67 (PPLNSLKSFESAARYLSFTKAADELCVTQAAVSHQIKLLEXFLGIDLFKRKNRSLELT). Positions 27–46 (FTKAADELCVTQAAVSHQIK) form a DNA-binding region, H-T-H motif.

This sequence belongs to the LysR transcriptional regulatory family.

Its subcellular location is the cytoplasm. Functionally, not known, the gcv operon regulated by the E.coli homolog does not exist in H.influenzae, so it probably acts as a transcriptional regulator on some other operon. This chain is Glycine cleavage system transcriptional activator homolog (gcvA), found in Haemophilus influenzae (strain ATCC 51907 / DSM 11121 / KW20 / Rd).